The chain runs to 953 residues: Isoleucine--tRNA ligase (953 aa).

The short motif at 57 to 67 (PYANGDIHIGH) is the 'HIGH' region element. E582 serves as a coordination point for L-isoleucyl-5'-AMP. Residues 623–627 (KMSKS) carry the 'KMSKS' region motif. K626 is a binding site for ATP. Zn(2+) is bound by residues C916, C919, C936, and C939.

It belongs to the class-I aminoacyl-tRNA synthetase family. IleS type 1 subfamily. As to quaternary structure, monomer. Zn(2+) is required as a cofactor.

The protein resides in the cytoplasm. It carries out the reaction tRNA(Ile) + L-isoleucine + ATP = L-isoleucyl-tRNA(Ile) + AMP + diphosphate. Catalyzes the attachment of isoleucine to tRNA(Ile). As IleRS can inadvertently accommodate and process structurally similar amino acids such as valine, to avoid such errors it has two additional distinct tRNA(Ile)-dependent editing activities. One activity is designated as 'pretransfer' editing and involves the hydrolysis of activated Val-AMP. The other activity is designated 'posttransfer' editing and involves deacylation of mischarged Val-tRNA(Ile). The sequence is that of Isoleucine--tRNA ligase from Bordetella avium (strain 197N).